The sequence spans 528 residues: Galactokinase (528 aa).

Residues Arg-53, Glu-59, His-60, and Asp-62 each contribute to the alpha-D-galactose site. Positions 165, 167, 169, and 170 each coordinate ATP. Alpha-D-galactose-binding residues include Asn-213 and Asp-217. Asp-217 functions as the Proton acceptor in the catalytic mechanism. 3 residues coordinate ATP: Ser-264, Asn-265, and Lys-266. Tyr-274 provides a ligand contact to alpha-D-galactose. Residue Ser-381 is modified to Phosphoserine.

It belongs to the GHMP kinase family. GalK subfamily.

The catalysed reaction is alpha-D-galactose + ATP = alpha-D-galactose 1-phosphate + ADP + H(+). Its pathway is carbohydrate metabolism; galactose metabolism. Functionally, galactokinase is a key enzyme in the galactose metabolism where it catalyzes the conversion of alpha-D-galactose to galactose 1-phosphate. Can also induce the transcription of the yeast GAL genes in response to the organism being challenged with galactose as the sole source of carbon. It's striking amino acid sequence similarity to GAL3 might explain its GAL3-like induction activity. This Saccharomyces cerevisiae (strain ATCC 204508 / S288c) (Baker's yeast) protein is Galactokinase.